Here is a 345-residue protein sequence, read N- to C-terminus: S-adenosylmethionine:tRNA ribosyltransferase-isomerase (345 aa).

The protein belongs to the QueA family. In terms of assembly, monomer.

The protein localises to the cytoplasm. It catalyses the reaction 7-aminomethyl-7-carbaguanosine(34) in tRNA + S-adenosyl-L-methionine = epoxyqueuosine(34) in tRNA + adenine + L-methionine + 2 H(+). The protein operates within tRNA modification; tRNA-queuosine biosynthesis. Transfers and isomerizes the ribose moiety from AdoMet to the 7-aminomethyl group of 7-deazaguanine (preQ1-tRNA) to give epoxyqueuosine (oQ-tRNA). This Shewanella amazonensis (strain ATCC BAA-1098 / SB2B) protein is S-adenosylmethionine:tRNA ribosyltransferase-isomerase.